A 158-amino-acid chain; its full sequence is Non-secretory ribonuclease (158 aa).

Positions 1 to 27 are cleaved as a signal peptide; sequence MVPKLFTSQICLLPLLGLLSAEGSPHA. The active-site Proton acceptor is histidine 42. A 3'-nitrotyrosine modification is found at tyrosine 60. A substrate-binding site is contributed by 65-69; that stretch reads KNKNT. 3 N-linked (GlcNAc...) asparagine glycosylation sites follow: asparagine 86, asparagine 92, and asparagine 111. Histidine 153 functions as the Proton donor in the catalytic mechanism.

It belongs to the pancreatic ribonuclease family. In terms of assembly, interacts with and forms a tight 1:1 complex with RNH1. Dimerization of two such complexes may occur.

Its subcellular location is the lysosome. It localises to the cytoplasmic granule. The enzyme catalyses an [RNA] containing cytidine + H2O = an [RNA]-3'-cytidine-3'-phosphate + a 5'-hydroxy-ribonucleotide-3'-[RNA].. It carries out the reaction an [RNA] containing uridine + H2O = an [RNA]-3'-uridine-3'-phosphate + a 5'-hydroxy-ribonucleotide-3'-[RNA].. Functionally, this is a non-secretory ribonuclease. It is a pyrimidine specific nuclease with a slight preference for U. Cytotoxin and helminthotoxin. Possesses a wide variety of biological activities. The chain is Non-secretory ribonuclease (RNASE2) from Callithrix jacchus (White-tufted-ear marmoset).